Reading from the N-terminus, the 320-residue chain is Ribosomal protein L11 methyltransferase (320 aa).

4 residues coordinate S-adenosyl-L-methionine: threonine 165, glycine 186, aspartate 208, and asparagine 251.

Belongs to the methyltransferase superfamily. PrmA family.

It is found in the cytoplasm. The catalysed reaction is L-lysyl-[protein] + 3 S-adenosyl-L-methionine = N(6),N(6),N(6)-trimethyl-L-lysyl-[protein] + 3 S-adenosyl-L-homocysteine + 3 H(+). Its function is as follows. Methylates ribosomal protein L11. The protein is Ribosomal protein L11 methyltransferase of Limosilactobacillus fermentum (strain NBRC 3956 / LMG 18251) (Lactobacillus fermentum).